A 255-amino-acid polypeptide reads, in one-letter code: 3-deoxy-manno-octulosonate cytidylyltransferase (255 aa).

It belongs to the KdsB family.

The protein localises to the cytoplasm. The enzyme catalyses 3-deoxy-alpha-D-manno-oct-2-ulosonate + CTP = CMP-3-deoxy-beta-D-manno-octulosonate + diphosphate. It functions in the pathway nucleotide-sugar biosynthesis; CMP-3-deoxy-D-manno-octulosonate biosynthesis; CMP-3-deoxy-D-manno-octulosonate from 3-deoxy-D-manno-octulosonate and CTP: step 1/1. The protein operates within bacterial outer membrane biogenesis; lipopolysaccharide biosynthesis. Its function is as follows. Activates KDO (a required 8-carbon sugar) for incorporation into bacterial lipopolysaccharide in Gram-negative bacteria. This is 3-deoxy-manno-octulosonate cytidylyltransferase from Polaromonas sp. (strain JS666 / ATCC BAA-500).